Here is an 846-residue protein sequence, read N- to C-terminus: Patched domain-containing protein 4 (846 aa).

10 consecutive transmembrane segments (helical) span residues 41-61 (HPVFFLTVPAVLTITFGLSAL), 230-250 (SILARSKVLVSLVLILTTATL), 265-285 (GLLGVLTVCISIITAAGIFFI), 293-313 (TLLGIPFFAMGHGTKGVFELL), 336-356 (VMVTYTMTSSLYFITFGMGAS), 373-393 (VSILLNYFYIFSFFGSCLVFA), 465-485 (PFVVILYLIYASFSFMGCLQI), 660-680 (PVLIAGFGVLLVLILTFFLVI), 686-706 (FWLILSVTSIELGVLGLMTLW), and 718-738 (LIYTLNFAIDHCAPLLFTFVL). The region spanning 233–392 (ARSKVLVSLV…FSFFGSCLVF (160 aa)) is the SSD domain. Asn-762 carries N-linked (GlcNAc...) asparagine glycosylation. 2 consecutive transmembrane segments (helical) span residues 765 to 785 (SFLIGLVPLLFVPSNLTFTLF) and 787 to 807 (CLLLTGGCTLLHCFVILPVFL).

Belongs to the patched family.

Its subcellular location is the membrane. Could act as a repressor of canonical hedgehog signaling by antagonizing the effects of SMO, as suggested by down-regulation of hedgehog target genes, including GLI1, PTCH1, and PTCH2 in PTCHD4-expressing cells. This chain is Patched domain-containing protein 4 (PTCHD4), found in Homo sapiens (Human).